The chain runs to 151 residues: Ubiquitin-conjugating enzyme E2 2 (151 aa).

In terms of domain architecture, UBC core spans A4–E150. Residue C88 is the Glycyl thioester intermediate of the active site.

Belongs to the ubiquitin-conjugating enzyme family.

The protein localises to the cytoplasm. The protein resides in the nucleus. The catalysed reaction is S-ubiquitinyl-[E1 ubiquitin-activating enzyme]-L-cysteine + [E2 ubiquitin-conjugating enzyme]-L-cysteine = [E1 ubiquitin-activating enzyme]-L-cysteine + S-ubiquitinyl-[E2 ubiquitin-conjugating enzyme]-L-cysteine.. It participates in protein modification; protein ubiquitination. In terms of biological role, catalyzes the covalent attachment of ubiquitin to other proteins. Plays a role in transcription regulation by catalyzing the monoubiquitination of histone H2B to form H2BK123ub1. H2BK123ub1 gives a specific tag for epigenetic transcriptional activation and is also a prerequisite for H3K4me and H3K79me formation. Also involved in postreplication repair of UV-damaged DNA, in N-end rule-dependent protein degradation and in sporulation. The chain is Ubiquitin-conjugating enzyme E2 2 (mus-8) from Neurospora crassa (strain ATCC 24698 / 74-OR23-1A / CBS 708.71 / DSM 1257 / FGSC 987).